The following is a 138-amino-acid chain: Small ribosomal subunit protein uS11 (138 aa).

Disordered stretches follow at residues methionine 1–alanine 29 and glycine 117–valine 138. Residues lysine 13–lysine 22 are compositionally biased toward basic residues.

This sequence belongs to the universal ribosomal protein uS11 family. Part of the 30S ribosomal subunit. Interacts with proteins S7 and S18. Binds to IF-3.

In terms of biological role, located on the platform of the 30S subunit, it bridges several disparate RNA helices of the 16S rRNA. Forms part of the Shine-Dalgarno cleft in the 70S ribosome. The polypeptide is Small ribosomal subunit protein uS11 (Mycobacterium ulcerans (strain Agy99)).